The following is a 669-amino-acid chain: DNA ligase (669 aa).

Residues 34 to 38 (DAEYD), 83 to 84 (SL), and Glu-114 contribute to the NAD(+) site. Lys-116 (N6-AMP-lysine intermediate) is an active-site residue. NAD(+) is bound by residues Arg-137, Glu-171, Lys-287, and Lys-311. 4 residues coordinate Zn(2+): Cys-405, Cys-408, Cys-423, and Cys-428. The BRCT domain occupies 591-669 (NVESYFAGKT…EERFLQELNK (79 aa)).

This sequence belongs to the NAD-dependent DNA ligase family. LigA subfamily. It depends on Mg(2+) as a cofactor. Mn(2+) serves as cofactor.

The enzyme catalyses NAD(+) + (deoxyribonucleotide)n-3'-hydroxyl + 5'-phospho-(deoxyribonucleotide)m = (deoxyribonucleotide)n+m + AMP + beta-nicotinamide D-nucleotide.. DNA ligase that catalyzes the formation of phosphodiester linkages between 5'-phosphoryl and 3'-hydroxyl groups in double-stranded DNA using NAD as a coenzyme and as the energy source for the reaction. It is essential for DNA replication and repair of damaged DNA. The sequence is that of DNA ligase from Bacillus cereus (strain AH820).